Reading from the N-terminus, the 146-residue chain is Aminoglycoside N(6')-acetyltransferase type 1 (146 aa).

One can recognise an N-acetyltransferase domain in the interval 1-146; it reads MNIMPISESQ…RVVYFKKNIG (146 aa). Positions 22, 25, 66, and 79 each coordinate substrate. 81-83 lines the acetyl-CoA pocket; it reads IFV. Asp115 is a binding site for substrate. Asn120 contacts acetyl-CoA. Glu136 is a substrate binding site.

Homodimer.

The catalysed reaction is kanamycin B + acetyl-CoA = N(6')-acetylkanamycin B + CoA + H(+). Catalyzes the transfer of an acetyl group from acetyl-CoA to the 6'-amino group of aminoglycoside molecules conferring resistance to antibiotics containing the purpurosamine ring including amikacin, kanamycin, tobramycin and netilmicin. The protein is Aminoglycoside N(6')-acetyltransferase type 1 of Acinetobacter baumannii.